A 162-amino-acid chain; its full sequence is Cytochrome c-type biogenesis protein CcmE (162 aa).

Residues 1–7 (MTRKQRR) are Cytoplasmic-facing. The chain crosses the membrane as a helical; Signal-anchor for type II membrane protein span at residues 8-28 (LTMIGGSLVVLAIAAALVLNA). Residues 29–162 (LRDSIVFFST…EASGKQGVSQ (134 aa)) lie on the Periplasmic side of the membrane. Residues histidine 122 and tyrosine 126 each coordinate heme. Residues 138-162 (QGHWKDDYGPQAGAVEASGKQGVSQ) form a disordered region.

Belongs to the CcmE/CycJ family.

It localises to the cell inner membrane. Heme chaperone required for the biogenesis of c-type cytochromes. Transiently binds heme delivered by CcmC and transfers the heme to apo-cytochromes in a process facilitated by CcmF and CcmH. The chain is Cytochrome c-type biogenesis protein CcmE from Nitrobacter hamburgensis (strain DSM 10229 / NCIMB 13809 / X14).